Consider the following 226-residue polypeptide: Ribonuclease 3 (226 aa).

Residues 4 to 127 (LEEFEKKLGY…VMGAIYLEKG (124 aa)) form the RNase III domain. Glu40 contacts Mg(2+). Residue Asp44 is part of the active site. 2 residues coordinate Mg(2+): Asn113 and Glu116. The active site involves Glu116. In terms of domain architecture, DRBM spans 154–223 (DFKTALQEFT…AKEALKILKA (70 aa)).

Belongs to the ribonuclease III family. As to quaternary structure, homodimer. The cofactor is Mg(2+).

It is found in the cytoplasm. It carries out the reaction Endonucleolytic cleavage to 5'-phosphomonoester.. Functionally, digests double-stranded RNA. Involved in the processing of primary rRNA transcript to yield the immediate precursors to the large and small rRNAs (23S and 16S). Processes some mRNAs, and tRNAs when they are encoded in the rRNA operon. Processes pre-crRNA and tracrRNA of type II CRISPR loci if present in the organism. The polypeptide is Ribonuclease 3 (Nitratiruptor sp. (strain SB155-2)).